The chain runs to 1036 residues: Potassium-transporting ATPase alpha chain 2 (1036 aa).

Residues 1 to 50 (MRRKTEIYSVELNGTKDVKPADQRDDKKFKGAKNKDLEPNKSHEKEELKK) are disordered. At 1 to 99 (MRRKTEIYSV…PNTLTPPKQT (99 aa)) the chain is on the cytoplasmic side. Residues 14 to 50 (GTKDVKPADQRDDKKFKGAKNKDLEPNKSHEKEELKK) show a composition bias toward basic and acidic residues. A helical transmembrane segment spans residues 100-120 (PEIIKFLKQMVGGFSILLWIG). The Lumenal portion of the chain corresponds to 121-143 (AALCWIAFVIQYVNNSASLDNVY). A helical transmembrane segment spans residues 144–164 (LGAILVLVVILTGIFAYYQEA). Residues 165 to 300 (KSTNIMASFS…SEKTPIAIEI (136 aa)) are Cytoplasmic-facing. Residues 301–320 (EHFVHIVAGVAVSIDIIFFI) form a helical membrane-spanning segment. The Lumenal segment spans residues 321 to 332 (TAVCMKYYVLDA). Residues 333 to 350 (IIFLISIIVANVPEGLLA) traverse the membrane as a helical segment. Topologically, residues 351–784 (TVTVTLSLTA…EEGRLIFDNL (434 aa)) are cytoplasmic. Asp388 acts as the 4-aspartylphosphate intermediate in catalysis. Mg(2+) is bound by residues Asp729 and Asp733. Residues 785–804 (KKTIAYTLTKNIAELCPFLI) form a helical membrane-spanning segment. Residues 805–814 (YIVAGLPLPI) are Lumenal-facing. A helical transmembrane segment spans residues 815–835 (GTITILFIDLGTDIIPSIALA). The Cytoplasmic segment spans residues 836-855 (YEKAESDIMNRKPRHKKKDR). The helical transmembrane segment at 856–878 (LVNTQLAIYSYLHIGLMQALGGF) threads the bilayer. At 879-930 (LVYFTVYAQQGFWPTSLINLRVAWETDDINDLEDSYGQEWTRYQRKYLEWTG) the chain is on the lumenal side. A helical membrane pass occupies residues 931–950 (STAFFVAIMIQQIADLIIRK). Topologically, residues 951–964 (TRRNSIFQQGLFRN) are cytoplasmic. Ser955 is modified (phosphoserine; by PKA). A helical membrane pass occupies residues 965 to 983 (KVIWVGIASQVIVALILSY). The Lumenal segment spans residues 984 to 998 (GLGSVPALSFTMLRV). The chain crosses the membrane as a helical span at residues 999–1019 (QYWFVAVPHAILIWVYDEMRK). Over 1020–1036 (LFIRLYPGSWWDKNMYY) the chain is Cytoplasmic.

This sequence belongs to the cation transport ATPase (P-type) (TC 3.A.3) family. Type IIC subfamily. As to quaternary structure, the ATPase pump is composed of a catalytic alpha subunit and an auxiliary non-catalytic beta subunit. The alpha subunit pairs with the beta subunit of gastric H(+)/K(+) ATPase ATP4B or the beta subunit of Na(+)/K(+) ATPases ATP1B1 and ATP1B3; this interaction is required for the formation of a functionally active pump and its targeting at the plasma membrane. In terms of tissue distribution, expressed at high levels in distal colon, coagulating and preputial glands; at much lower levels in proximal colon, kidney, uterus, brain, placenta and lung; and at trace levels in heart and forestomach. Expressed in distal colon epithelium (at protein level). Expressed in anterior prostate (at protein level).

The protein localises to the apical cell membrane. It carries out the reaction K(+)(out) + ATP + H2O + H(+)(in) = K(+)(in) + ADP + phosphate + 2 H(+)(out). The catalysed reaction is K(+)(out) + Na(+)(in) + ATP + H2O = K(+)(in) + Na(+)(out) + ADP + phosphate + H(+). Its activity is regulated as follows. Up-regulated by K(+) ions in a dose-dependent way. Functionally, the catalytic subunit of a H(+)/K(+) ATPase and/or Na(+)/K(+) ATPase pump which transports K(+) ions in exchange for Na(+) and/or H(+) ions across the apical membrane of epithelial cells. Uses ATP as an energy source to pump K(+) ions into the cell while transporting Na(+) and/or H(+) ions to the extracellular compartment. Involved in the maintenance of electrolyte homeostasis through K(+) ion absorption in kidney and colon. In the airway epithelium, may play a primary role in mucus acidification regulating its viscosity and clearance. This Rattus norvegicus (Rat) protein is Potassium-transporting ATPase alpha chain 2 (Atp12a).